The primary structure comprises 62 residues: Bacteriocin piscicolin-126 (62 aa).

Positions 1–18 (MKTVKELSVKEMQLTTGG) are excised as a propeptide. Cysteine 27 and cysteine 32 are oxidised to a cystine.

Its subcellular location is the secreted. In terms of biological role, inhibits the growth of several Gram-positive bacteria, especially the food-borne pathogen L.monocytogenes, but has no effect on the growth of a number of yeasts and Gram-negative bacteria. In Carnobacterium maltaromaticum (Carnobacterium piscicola), this protein is Bacteriocin piscicolin-126 (pisA).